The primary structure comprises 171 residues: MADPARAKRLAKRISTIVASAIEYEIKDPRLAGVTITDSKVTNDLHDATLYYTVLGRSLDEEPDYAGAAAALEKAKGVLRTKVGAGTGVRFTPTLAFVRDTVPDTAHRMEELLARARAADEDLARVREGAKHAGDADPYRVSGVEEEAGGSGEVQAEFDAEDTGDRNRQDD.

The span at Val-126 to Pro-138 shows a compositional bias: basic and acidic residues. A disordered region spans residues Val-126–Asp-171.

The protein belongs to the RbfA family. As to quaternary structure, monomer. Binds 30S ribosomal subunits, but not 50S ribosomal subunits or 70S ribosomes.

The protein resides in the cytoplasm. One of several proteins that assist in the late maturation steps of the functional core of the 30S ribosomal subunit. Associates with free 30S ribosomal subunits (but not with 30S subunits that are part of 70S ribosomes or polysomes). Required for efficient processing of 16S rRNA. May interact with the 5'-terminal helix region of 16S rRNA. This is Ribosome-binding factor A from Mycobacterium sp. (strain JLS).